We begin with the raw amino-acid sequence, 613 residues long: Ribosome-associated molecular chaperone SSB2 (613 aa).

Ala2 carries the post-translational modification N-acetylalanine. A nucleotide binding domain (NBD) region spans residues 2-391 (AEGVFQGAIG…ILTGQSTSDE (390 aa)). 16-18 (TTY) is a binding site for ATP. Thr47 is modified (phosphothreonine). ATP-binding positions include Lys73, 205–207 (GGT), 271–278 (ERAKRTLS), and Gly342. The inter-domain linker stretch occupies residues 392-402 (TKDLLLLDVAP). The substrate binding domain (SBD) stretch occupies residues 403–613 (LSLGVGMQGD…RVVTKAMSSR (211 aa)). A Contributes to ribosome binding motif is present at residues 428-430 (KRR). Thr431 carries the post-translational modification Phosphothreonine. The lid domain (SBDalpha) stretch occupies residues 516–612 (SEEIEKMVNQ…KRVVTKAMSS (97 aa)). The Nuclear export signal signature appears at 574 to 582 (IEAALSDAL). The required for interaction with ribosomes stretch occupies residues 601–613 (GLKRVVTKAMSSR).

The protein belongs to the heat shock protein 70 family. Ssb-type Hsp70 subfamily. As to quaternary structure, binds to ribosomes. Binds close to the ribosomal tunnel exit via contacts with both ribosomal proteins RPL35, RPL39 and RPL19, and rRNA. Directly interacts with nascent polypeptides. This interaction is dependent on the ribosome-associated complex (RAC). Interacts with SSE1.

It is found in the cytoplasm. The enzyme catalyses ATP + H2O = ADP + phosphate + H(+). Ribosome-bound, Hsp70-type chaperone that assists in the cotranslational folding of newly synthesized proteins in the cytosol. Stimulates folding by interacting with nascent chains, binding to short, largely hydrophobic sequences exposed by unfolded proteins, thereby stabilizing longer, more slowly translated, and aggregation-prone nascent polypeptides and domains that cannot fold stably until fully synthesized. The Hsp70-protein substrate interaction depends on ATP-binding and on allosteric regulation between the NBD and the SBD. The ATP-bound state is characterized by a fast exchange rate of substrate (low affinity state), while in the ADP-bound state exchange is much slower (high affinity state). During the Hsp70 cycle, the chaperone switches between the ATP-bound state (open conformation) and the ADP-bound state (closed conformation) by major conformational rearrangements involving mainly the lid domain. Ssb cooperates with a specific Hsp40/Hsp70 co-chaperone termed the ribosome-associated complex (RAC), which stimulates the ATPase activity of the ribosome-associated pool of Ssbs and switches it to the high affinity substrate binding state. Hsp110 chaperone SSE1 and FES1 act as nucleotide exchange factors that cause substrate release. The protein is Ribosome-associated molecular chaperone SSB2 of Saccharomyces cerevisiae (strain ATCC 204508 / S288c) (Baker's yeast).